Reading from the N-terminus, the 146-residue chain is Pre-mRNA-splicing factor cwf14 (146 aa).

This sequence belongs to the BUD31 (G10) family. Belongs to the 40S cdc5-associated complex (or cwf complex), a spliceosome sub-complex reminiscent of a late-stage spliceosome composed of the U2, U5 and U6 snRNAs and at least brr2, cdc5, cwf2/prp3, cwf3/syf1, cwf4/syf3, cwf5/ecm2, spp42/cwf6, cwf7/spf27, cwf8, cwf9, cwf10, cwf11, cwf12, prp45/cwf13, cwf14, cwf15, cwf16, cwf17, cwf18, cwf19, cwf20, cwf21, cwf22, cwf23, cwf24, cwf25, cwf26, cyp7/cwf27, cwf28, cwf29/ist3, lea1, msl1, prp5/cwf1, prp10, prp12/sap130, prp17, prp22, sap61, sap62, sap114, sap145, slu7, smb1, smd1, smd3, smf1, smg1 and syf2.

The protein resides in the nucleus. Involved in mRNA splicing where it associates with cdc5 and the other cwf proteins as part of the spliceosome. The sequence is that of Pre-mRNA-splicing factor cwf14 (cwf14) from Schizosaccharomyces pombe (strain 972 / ATCC 24843) (Fission yeast).